A 566-amino-acid chain; its full sequence is Serine/threonine-protein kinase ppk14 (566 aa).

Over residues 1–31 (MNELHDGESSEEGRINVEDHLEEAKKDDTGH) the composition is skewed to basic and acidic residues. Disordered regions lie at residues 1-39 (MNEL…GTAK) and 60-152 (SRKK…EKLK). A compositionally biased stretch (polar residues) spans 74–85 (AANQSPSGAPES). Positions 119 to 129 (SFFKSGRKKKD) are enriched in basic residues. Residues 134 to 145 (RNVSRSNGADTS) show a composition bias toward polar residues. The region spanning 195-485 (FEKVFLLGKG…AADVKLHPFF (291 aa)) is the Protein kinase domain. Residues 201-209 (LGKGDVGRV) and lysine 224 each bind ATP. The active-site Proton acceptor is the aspartate 320. Threonine 379 carries the post-translational modification Phosphothreonine. Position 381 is a phosphoserine (serine 381). At threonine 385 the chain carries Phosphothreonine.

It belongs to the protein kinase superfamily. Ser/Thr protein kinase family. KIN82 subfamily.

The enzyme catalyses L-seryl-[protein] + ATP = O-phospho-L-seryl-[protein] + ADP + H(+). It catalyses the reaction L-threonyl-[protein] + ATP = O-phospho-L-threonyl-[protein] + ADP + H(+). The polypeptide is Serine/threonine-protein kinase ppk14 (ppk14) (Schizosaccharomyces pombe (strain 972 / ATCC 24843) (Fission yeast)).